The chain runs to 84 residues: MAHKKGASSSRNGRESAAQRLGVKRFGGQRVNAGEIIIRQRGTKFHPGDLVGRGRDDTLFALAAGSVQFGTKRGRKTVSIVPQQ.

The segment at 1–23 (MAHKKGASSSRNGRESAAQRLGV) is disordered.

The protein belongs to the bacterial ribosomal protein bL27 family.

In Salinispora arenicola (strain CNS-205), this protein is Large ribosomal subunit protein bL27.